The following is a 242-amino-acid chain: Cell division protein FtsQ (242 aa).

Residues 1 to 12 (MWDNAEAMERLT) lie on the Cytoplasmic side of the membrane. The chain crosses the membrane as a helical span at residues 13–32 (RWLLVMMAMLLAASGLVWFY). Topologically, residues 33 to 242 (NSNHLPVKQV…DGLPEKESEE (210 aa)) are periplasmic. Positions 37-106 (LPVKQVSLKG…DTVEVVLTER (70 aa)) constitute a POTRA domain.

This sequence belongs to the FtsQ/DivIB family. FtsQ subfamily. As to quaternary structure, part of a complex composed of FtsB, FtsL and FtsQ.

The protein resides in the cell inner membrane. In terms of biological role, essential cell division protein. May link together the upstream cell division proteins, which are predominantly cytoplasmic, with the downstream cell division proteins, which are predominantly periplasmic. May control correct divisome assembly. The chain is Cell division protein FtsQ from Neisseria gonorrhoeae (strain ATCC 700825 / FA 1090).